The chain runs to 204 residues: Superoxide dismutase [Mn] (204 aa).

Residue H27 coordinates Mn(2+). T34 and T70 each carry phosphothreonine. The Mn(2+) site is built by H82, D164, and H168.

The protein belongs to the iron/manganese superoxide dismutase family. In terms of assembly, homodimer. Requires Mn(2+) as cofactor.

The enzyme catalyses 2 superoxide + 2 H(+) = H2O2 + O2. Functionally, destroys superoxide anion radicals which are normally produced within the cells and which are toxic to biological systems. This chain is Superoxide dismutase [Mn] (sodA), found in Geobacillus stearothermophilus (Bacillus stearothermophilus).